We begin with the raw amino-acid sequence, 619 residues long: CLPTM1-like membrane protein cnrB (619 aa).

Residues 1–21 (MNNQGGAVAANGQRPQAQQQQ) are disordered. Over residues 9–21 (AANGQRPQAQQQQ) the composition is skewed to low complexity. 6 helical membrane-spanning segments follow: residues 26-46 (IMGI…ASFA), 324-344 (WILG…FLAF), 360-380 (LSVK…LYLL), 384-404 (TSYM…WKLG), 445-465 (YLSW…LYYH), and 474-496 (VVSS…QLFI). Residues 566–619 (SEEAEEVQQQDKKEIKEKVEEREEEKQEEEEEEKEKEEESTSSSKVTKRKTKKV) form a disordered region. Positions 574–590 (QQDKKEIKEKVEEREEE) are enriched in basic and acidic residues. Positions 591–605 (KQEEEEEEKEKEEES) are enriched in acidic residues.

It belongs to the CLPTM1 family.

The protein resides in the membrane. The polypeptide is CLPTM1-like membrane protein cnrB (cnrB) (Dictyostelium discoideum (Social amoeba)).